The primary structure comprises 246 residues: Sugar fermentation stimulation protein homolog (246 aa).

Belongs to the SfsA family.

The sequence is that of Sugar fermentation stimulation protein homolog from Prochlorococcus marinus (strain MIT 9215).